The following is a 186-amino-acid chain: MAARLLRVASAALGDTAGRWRLLARPRAGAGGLRGSRGPGLGGGAVATRTLSVSGRAQSSSEDKITVHFINRDGETLTTKGKIGDSLLDVVVQNNLDIDGFGACEGTLACSTCHLIFEQHIFEKLEAITDEENDMLDLAYGLTDRSRLGCQICLTKAMDNMTVRVPDAVSDARESIDMGMNSSKIE.

Residues 1–58 (MAARLLRVASAALGDTAGRWRLLARPRAGAGGLRGSRGPGLGGGAVATRTLSVSGRAQ) constitute a mitochondrion transit peptide. Serine 61 is subject to Phosphoserine. Lysine 64 is subject to N6-acetyllysine; alternate. N6-succinyllysine; alternate is present on lysine 64. One can recognise a 2Fe-2S ferredoxin-type domain in the interval 65–169 (ITVHFINRDG…NMTVRVPDAV (105 aa)). [2Fe-2S] cluster-binding residues include cysteine 104, cysteine 110, cysteine 113, and cysteine 150. An N6-succinyllysine modification is found at lysine 156. Serine 175 is modified (phosphoserine).

This sequence belongs to the adrenodoxin/putidaredoxin family. As to quaternary structure, interacts with CYP11A1. [2Fe-2S] cluster serves as cofactor. Detected in adrenal cortex and corpus luteum (at protein level).

The protein resides in the mitochondrion matrix. Its function is as follows. Essential for the synthesis of various steroid hormones. Participates in the reduction of mitochondrial cytochrome P450 for steroidogenesis. Transfers electrons from adrenodoxin reductase to CYP11A1, a cytochrome P450 that catalyzes cholesterol side-chain cleavage to produce pregnenolone, the precursor of most steroid hormones. Does not form a ternary complex with adrenodoxin reductase and CYP11A1 but shuttles between the two enzymes to transfer electrons. The chain is Adrenodoxin, mitochondrial (FDX1) from Bos taurus (Bovine).